Consider the following 498-residue polypeptide: ATP synthase subunit beta, chloroplastic (498 aa).

ATP is bound at residue 172 to 179 (GGAGVGKT).

It belongs to the ATPase alpha/beta chains family. As to quaternary structure, F-type ATPases have 2 components, CF(1) - the catalytic core - and CF(0) - the membrane proton channel. CF(1) has five subunits: alpha(3), beta(3), gamma(1), delta(1), epsilon(1). CF(0) has four main subunits: a(1), b(1), b'(1) and c(9-12).

It is found in the plastid. Its subcellular location is the chloroplast thylakoid membrane. The enzyme catalyses ATP + H2O + 4 H(+)(in) = ADP + phosphate + 5 H(+)(out). Produces ATP from ADP in the presence of a proton gradient across the membrane. The catalytic sites are hosted primarily by the beta subunits. The protein is ATP synthase subunit beta, chloroplastic of Nicotiana sp. (Tobacco).